The primary structure comprises 194 residues: Ancillary SecYEG translocon subunit (194 aa).

Over Met-1–Ser-10 the chain is Cytoplasmic. A helical membrane pass occupies residues Leu-11 to Ile-31. Residues Lys-32–Arg-194 are Periplasmic-facing.

It belongs to the YfgM family. In terms of assembly, interacts with the SecYEG translocon. Forms a complex with PpiD.

It localises to the cell inner membrane. In terms of biological role, may mediate protein transfer from the SecYEG translocon to the periplasmic chaperone network via its periplasmic C-terminal region. This Buchnera aphidicola subsp. Schizaphis graminum (strain Sg) protein is Ancillary SecYEG translocon subunit.